Consider the following 321-residue polypeptide: Protein BIG GRAIN 1-like E (321 aa).

The tract at residues 134 to 217 (AGSKKNKSKS…PPPYLNTPTK (84 aa)) is disordered. Basic residues predominate over residues 135–147 (GSKKNKSKSKSKT). Residues 172–206 (ISHFFSSSRSTSTTTTTTASSSSKSLISSSSSGFR) are compositionally biased toward low complexity.

The protein belongs to the BIG GRAIN 1 (BG1) plant protein family.

It is found in the cell membrane. Involved in auxin transport. Regulator of the auxin signaling pathway. The polypeptide is Protein BIG GRAIN 1-like E (Arabidopsis thaliana (Mouse-ear cress)).